Reading from the N-terminus, the 975-residue chain is E3 ubiquitin-protein ligase NEDD4-like (975 aa).

Ala-2 is modified (N-acetylalanine). The 123-residue stretch at 4–126 (GLGEPVYGLS…TEDPTMERPY (123 aa)) folds into the C2 domain. 3 disordered regions span residues 178-202 (DSND…WEEK), 244-272 (AAHR…VPEP), and 285-312 (DSLG…EELS). The WW 1 domain maps to 193–226 (PPLPPGWEEKVDNLGRTYYVNHNNRTTQWHRPSL). Ser-312 carries the phosphoserine modification. Thr-318 carries the phosphothreonine modification. Position 342 is a phosphoserine; by WNK1 and WNK4 (Ser-342). Disordered regions lie at residues 349 to 393 (EQGH…GWEE) and 424 to 496 (GASG…KVTQ). The residue at position 367 (Thr-367) is a Phosphothreonine; by SGK1. Residues 385-418 (PGLPSGWEERKDAKGRTYYVNHNNRTTTWTRPIM) enclose the WW 2 domain. Residue Ser-446 is modified to Phosphoserine. Ser-448 is modified (phosphoserine; by PKA and SGK1). The residue at position 449 (Ser-449) is a Phosphoserine; by WNK1 and WNK4. Basic and acidic residues predominate over residues 460 to 471 (GAKDSPVRRAVK). Phosphoserine is present on residues Ser-464, Ser-475, Ser-479, Ser-483, and Ser-487. 2 consecutive WW domains span residues 497 to 530 (SFLP…DPRL) and 548 to 581 (GPLP…DPRL). Residues 640-974 (RPDVLKARLW…VENAQGFEGV (335 aa)) enclose the HECT domain. Residue Cys-942 is the Glycyl thioester intermediate of the active site.

In terms of assembly, interacts with UBE2E3. Interacts with NDFIP1; this interaction activates the E3 ubiquitin-protein ligase. Interacts with NDFIP2; this interaction activates the E3 ubiquitin-protein ligase. Interacts (via WW domains) with SCN1A. Interacts (via WW domains) with SCN2A. Interacts (via WW domains) with SCN3A. Interacts (via WW domains) with SCN5A. Interacts (via WW domains) with SCN8A. Interacts (via WW domains) with SCN9A. Interacts (via WW domains) with SCN10A. Interacts (via WW domains) with CLCN5. Interacts with SMAD2. Interacts with SMAD3. Interacts with SMAD6. Interacts with SMAD7. The phosphorylated form interacts with 14-3-3 proteins. Interacts with TNK2. Interacts with WNK1. Interacts with SGK1. Interacts (via C2 domain) with NPC2. Interacts with ARRDC4. Interacts with KCNQ1; promotes internalization of KCNQ1. Interacts (via domains WW1, 3 and 4) with USP36; the interaction inhibits ubiquitination of, at least, NTRK1, KCNQ2 and KCNQ3 by NEDD4L. Interacts with PRRG4 (via cytoplasmic domain). Interacts with LDLRAD3; the interaction is direct. Interacts with UBE2D2. Interacts with TTYH2 and TTYH3. (Microbial infection) Interacts with Epstein-Barr virus LMP2A. Phosphorylated by SGK1 or PKA; which impairs interaction with SCNN. Interaction with YWHAH inhibits dephosphorylation. Post-translationally, auto-ubiquitinated. Deubiquitinated by USP36, no effect on NEDD4L protein levels. Both proteins interact and regulate each other's ubiquitination levels. As to expression, ubiquitously expressed, with highest levels in prostate, pancreas, and kidney. Expressed in melanocytes.

The protein localises to the cytoplasm. It localises to the golgi apparatus. It is found in the endosome. The protein resides in the multivesicular body. It carries out the reaction S-ubiquitinyl-[E2 ubiquitin-conjugating enzyme]-L-cysteine + [acceptor protein]-L-lysine = [E2 ubiquitin-conjugating enzyme]-L-cysteine + N(6)-ubiquitinyl-[acceptor protein]-L-lysine.. The enzyme catalyses [E2 ubiquitin-conjugating enzyme]-S-ubiquitinyl-L-cysteine + [acceptor protein]-L-cysteine = [E2 ubiquitin-conjugating enzyme]-L-cysteine + [acceptor protein]-S-ubiquitinyl-L-cysteine.. The protein operates within protein modification; protein ubiquitination. With respect to regulation, activated by NDFIP1- and NDFIP2-binding. Its function is as follows. E3 ubiquitin-protein ligase that mediates the polyubiquitination of lysine and cysteine residues on target proteins and is thereby implicated in the regulation of various signaling pathways including autophagy, innate immunity or DNA repair. Inhibits TGF-beta signaling by triggering SMAD2 and TGFBR1 ubiquitination and proteasome-dependent degradation. Downregulates autophagy and cell growth by ubiquitinating and reducing cellular ULK1 or ASCT2 levels. Promotes ubiquitination and internalization of various plasma membrane channels such as ENaC, SCN2A/Nav1.2, SCN3A/Nav1.3, SCN5A/Nav1.5, SCN9A/Nav1.7, SCN10A/Nav1.8, KCNA3/Kv1.3, KCNH2, EAAT1, KCNQ2/Kv7.2, KCNQ3/Kv7.3 or CLC5. Promotes ubiquitination and degradation of SGK1 and TNK2. Ubiquitinates BRAT1 and this ubiquitination is enhanced in the presence of NDFIP1. Plays a role in dendrite formation by melanocytes. Involved in the regulation of TOR signaling. Ubiquitinates and regulates protein levels of NTRK1 once this one is activated by NGF. Plays a role in antiviral innate immunity by catalyzing 'Lys-29'-linked cysteine ubiquitination of TRAF3, resulting in enhanced 'Lys-48' and 'Lys-63'-linked ubiquitination of TRAF3. Ubiquitinates TTYH2 and TTYH3 and regulates protein levels of TTYH2. The sequence is that of E3 ubiquitin-protein ligase NEDD4-like from Homo sapiens (Human).